The chain runs to 361 residues: 3-dehydroquinate synthase (361 aa).

Residues Asn-41, 70-75 (DGEQYK), 104-108 (GVIGD), 128-129 (TT), Lys-141, Lys-150, 150-151 (KN), and 168-171 (CLTT) each bind NAD(+). Residues Glu-183, His-246, and His-263 each contribute to the Zn(2+) site.

This sequence belongs to the sugar phosphate cyclases superfamily. Dehydroquinate synthase family. Requires NAD(+) as cofactor. Co(2+) serves as cofactor. The cofactor is Zn(2+).

The protein resides in the cytoplasm. The enzyme catalyses 7-phospho-2-dehydro-3-deoxy-D-arabino-heptonate = 3-dehydroquinate + phosphate. It functions in the pathway metabolic intermediate biosynthesis; chorismate biosynthesis; chorismate from D-erythrose 4-phosphate and phosphoenolpyruvate: step 2/7. Functionally, catalyzes the conversion of 3-deoxy-D-arabino-heptulosonate 7-phosphate (DAHP) to dehydroquinate (DHQ). The polypeptide is 3-dehydroquinate synthase (Vibrio cholerae serotype O1 (strain ATCC 39315 / El Tor Inaba N16961)).